We begin with the raw amino-acid sequence, 95 residues long: Small ribosomal subunit protein bS18 (95 aa).

Belongs to the bacterial ribosomal protein bS18 family. As to quaternary structure, part of the 30S ribosomal subunit. Forms a tight heterodimer with protein bS6.

In terms of biological role, binds as a heterodimer with protein bS6 to the central domain of the 16S rRNA, where it helps stabilize the platform of the 30S subunit. The sequence is that of Small ribosomal subunit protein bS18 from Acidiphilium cryptum (strain JF-5).